Consider the following 400-residue polypeptide: MTALKVGSESWWQSKHGPEWQRLNDEMFEVTFWWRDPQGSEEYSTIKRVWVYITGVTDHHQNSQPQSMQRIAGTNVWQWTTQLNANWRGSYCFIPTERDDIFSVPSPDRLELREGWRKLLPQAIADPLNLQSWKGGRGHAVSALEMPQAPLQPGWDCPQAPEIPAKEIIWKSERLKKSRRVWIFTTGDATAEERPLAVLLDGEFWAQSMPVWPVLTSLTHRQQLPPAVYVLIDAIDTTHRAHELPCNADFWLAVQQELLPLVKAIAPFSDRADRTVVAGQSFGGLSALYAGLHWPERFGCVLSQSGSYWWPHRGGQQEGVLLEKLKAGEVSAEGLRIVLEAGIREPMIMRANQALYAQLHPIKESIFWRQVDGGHDALCWRGGLMQGLIDLWQPLFHDRS.

It belongs to the Fes family. As to quaternary structure, monomer.

It localises to the cytoplasm. It catalyses the reaction Fe(III)-enterobactin + 3 H2O + H(+) = Fe(III)-[N-(2,3-dihydroxybenzoyl)-L-serine] + 2 N-(2,3-dihydroxybenzoyl)-L-serine. The catalysed reaction is Fe(III)-enterobactin + H2O = Fe(III)-[N-(2,3-dihydroxybenzoyl)-L-serine]3 + H(+). The enzyme catalyses Fe(III)-[N-(2,3-dihydroxybenzoyl)-L-serine]3 + H2O + H(+) = Fe(III)-[N-(2,3-dihydroxybenzoyl)-L-serine]2 + N-(2,3-dihydroxybenzoyl)-L-serine. It carries out the reaction Fe(III)-[N-(2,3-dihydroxybenzoyl)-L-serine]2 + H2O + H(+) = Fe(III)-[N-(2,3-dihydroxybenzoyl)-L-serine] + N-(2,3-dihydroxybenzoyl)-L-serine. It catalyses the reaction enterobactin + 3 H2O = 3 N-(2,3-dihydroxybenzoyl)-L-serine + 2 H(+). With respect to regulation, inhibited by N-ethylmaleimide. Catalyzes the hydrolysis of ferric enterobactin (Fe-Ent). Is responsible for the release of iron from ferric enterobactin. Also catalyzes the hydrolysis of iron-free enterobactin (Ent). Cleavage of ferric enterobactin results in a mixture of three hydrolysis products, 2,3-dihydroxybenzoylserine (DHBS), the linear dimer (DHBS)2 and the linear trimer (DHBS)3, while cleavage of iron-free enterobactin yields only the monomer. Hydrolysis of ferric enterobactin is less efficient than hydrolysis of unliganded enterobactin. It also cleaves the aluminum (III) complex at a rate similar to the ferric complex. This is Iron(III) enterobactin esterase from Escherichia coli (strain K12).